Here is a 198-residue protein sequence, read N- to C-terminus: Iron-sulfur flavoprotein MJ0731 (198 aa).

Positions 46, 49, 52, and 59 each coordinate [4Fe-4S] cluster.

This sequence belongs to the SsuE family. Isf subfamily. As to quaternary structure, homodimer. FMN serves as cofactor. The cofactor is [4Fe-4S] cluster.

Redox-active protein probably involved in electron transport. This is Iron-sulfur flavoprotein MJ0731 from Methanocaldococcus jannaschii (strain ATCC 43067 / DSM 2661 / JAL-1 / JCM 10045 / NBRC 100440) (Methanococcus jannaschii).